We begin with the raw amino-acid sequence, 337 residues long: Methionyl-tRNA formyltransferase (337 aa).

Residue 116–119 (SILP) participates in (6S)-5,6,7,8-tetrahydrofolate binding.

Belongs to the Fmt family.

It carries out the reaction L-methionyl-tRNA(fMet) + (6R)-10-formyltetrahydrofolate = N-formyl-L-methionyl-tRNA(fMet) + (6S)-5,6,7,8-tetrahydrofolate + H(+). Attaches a formyl group to the free amino group of methionyl-tRNA(fMet). The formyl group appears to play a dual role in the initiator identity of N-formylmethionyl-tRNA by promoting its recognition by IF2 and preventing the misappropriation of this tRNA by the elongation apparatus. The chain is Methionyl-tRNA formyltransferase from Desulfovibrio desulfuricans (strain ATCC 27774 / DSM 6949 / MB).